A 178-amino-acid polypeptide reads, in one-letter code: Large ribosomal subunit protein uL6 (178 aa).

The protein belongs to the universal ribosomal protein uL6 family. In terms of assembly, part of the 50S ribosomal subunit.

Functionally, this protein binds to the 23S rRNA, and is important in its secondary structure. It is located near the subunit interface in the base of the L7/L12 stalk, and near the tRNA binding site of the peptidyltransferase center. This is Large ribosomal subunit protein uL6 from Helicobacter pylori (strain G27).